The sequence spans 59 residues: MNQDQEEEKPTCYDLLKVKHDLNKYNENIIRQLKMSHAPIDACEIFLFLLEKWCTTGGR.

This is an uncharacterized protein from Acidianus convivator (ATV).